A 454-amino-acid polypeptide reads, in one-letter code: Protein phosphatase 1F (454 aa).

Positions 1-12 (MSSGAPQKSSPM) are enriched in polar residues. Residues 1-28 (MSSGAPQKSSPMASGAEETPGFLDTLLQ) are disordered. One can recognise a PPM-type phosphatase domain in the interval 156–413 (LVSIHAIRNT…DNITVMVVFL (258 aa)). Positions 198, 199, 360, and 404 each coordinate Mn(2+). The disordered stretch occupies residues 419 to 454 (LLEGGNQGEGDPQAEGRRQDLPSSLPEPETQAPPRS). Phosphoserine is present on serine 454.

Belongs to the PP2C family. As to quaternary structure, associates with FEM1B. The cofactor is Mg(2+). It depends on Mn(2+) as a cofactor.

It carries out the reaction O-phospho-L-seryl-[protein] + H2O = L-seryl-[protein] + phosphate. The catalysed reaction is O-phospho-L-threonyl-[protein] + H2O = L-threonyl-[protein] + phosphate. In terms of biological role, dephosphorylates and concomitantly deactivates CaM-kinase II activated upon autophosphorylation, and CaM-kinases IV and I activated upon phosphorylation by CaM-kinase kinase. Promotes apoptosis. This is Protein phosphatase 1F (PPM1F) from Homo sapiens (Human).